A 402-amino-acid chain; its full sequence is Sorting nexin 1 (402 aa).

Positions 1-10 (MESTEQPRNI) are enriched in polar residues. Positions 1 to 25 (MESTEQPRNISGSMQSPRSPSSHPY) are disordered. Residues 11–24 (SGSMQSPRSPSSHP) are compositionally biased toward low complexity. S16 carries the post-translational modification Phosphoserine. The PX domain maps to 24-143 (PYLSVSVTDP…TFLQADEETM (120 aa)). A 1,2-diacyl-sn-glycero-3-phospho-(1D-myo-inositol-3-phosphate) contacts are provided by R67, K93, and R109. In terms of domain architecture, BAR spans 160–402 (LMQMFRDVQS…LPKLEASYSV (243 aa)).

Belongs to the sorting nexin family. As to quaternary structure, homodimer. Heterodimer with SNX2A or SNX2B. Component of the retromer complex which consists of VPS29 (MAG1), VPS26 (VPS26A or VPS26B), VPS35 (VPS35A or VPS35B or VPS35C), VPS5/17 (SNX1 or SNX2A or SNX2B). Interacts with BLOS1 and BLOS2. Ubiquitously expressed.

It localises to the cytoplasm. Its subcellular location is the endosome membrane. It is found in the prevacuolar compartment membrane. The protein resides in the golgi apparatus. The protein localises to the trans-Golgi network membrane. Its function is as follows. Plays a role in vesicular protein sorting. Acts at the crossroads between the secretory and endocytic pathways. Is involved in the endosome to vacuole protein transport via its interaction with the BLOS1/2 proteins and, as component of the membrane-associated retromer complex, is also involved in endosome-to-Golgi retrograde transport. Required for the auxin-carrier protein PIN2 sorting to the lytic vacuolar pathway and the trafficking of several plasma membrane proteins. Also involved in the efficient sorting of seed storage protein globulin 12S. The polypeptide is Sorting nexin 1 (SNX1) (Arabidopsis thaliana (Mouse-ear cress)).